Reading from the N-terminus, the 321-residue chain is Olfactory receptor 52N2 (321 aa).

Topologically, residues 1-27 (MSGDNSSSLTPGFFILNGVPGLEATHI) are extracellular. N-linked (GlcNAc...) asparagine glycosylation occurs at Asn5. Residues 28 to 48 (WISLPFCFMYIIAVVGNCGLI) form a helical membrane-spanning segment. At 49–56 (CLISHEEA) the chain is on the cytoplasmic side. A helical membrane pass occupies residues 57–77 (LHRPMYYFLALLSFTDVTLCT). Residues 78–101 (TMVPNMLCIFWFNLKEIDFNACLA) are Extracellular-facing. A disulfide bond links Cys99 and Cys191. A helical membrane pass occupies residues 102-122 (QMFFVHMLTGMESGVLMLMAL). The Cytoplasmic segment spans residues 123 to 141 (DRYVAICYPLRYATILTNP). Residues 142 to 162 (VIAKAGLATFLRNVMLIIPFT) form a helical membrane-spanning segment. The Extracellular portion of the chain corresponds to 163–198 (LLTKRLPYCRGNFIPHTYCDHMSVAKVSCGNFKVNA). Residues 199–219 (IYGLMVALLIGVFDICCISVS) form a helical membrane-spanning segment. Topologically, residues 220–239 (YTMILQAVMSLSSADARHKA) are cytoplasmic. The helical transmembrane segment at 240-260 (FSTCTSHMCSIVITYVAAFFT) threads the bilayer. The Extracellular segment spans residues 261–276 (FFTHRFVGHNIPNHIH). Residues 277 to 297 (IIVANLYLLLPPTMNPIVYGV) form a helical membrane-spanning segment. The Cytoplasmic portion of the chain corresponds to 298–321 (KTKQIQEGVIKFLLGDKVSFTYDK).

This sequence belongs to the G-protein coupled receptor 1 family.

It is found in the cell membrane. In terms of biological role, odorant receptor. This chain is Olfactory receptor 52N2 (OR52N2), found in Homo sapiens (Human).